The sequence spans 1749 residues: Kinase non-catalytic C-lobe domain-containing protein 1 (1749 aa).

Residues Val37–Glu217 enclose the KIND 1 domain. 2 disordered regions span residues Val210–Arg275 and Cys361–Leu435. Basic and acidic residues-rich tracts occupy residues Leu363–Leu373 and Ala410–Glu430. The region spanning Val444–Glu608 is the KIND 2 domain. 2 disordered regions span residues Ala689–Asp871 and Gln962–Ser1061. A compositionally biased stretch (basic and acidic residues) spans Glu702 to Leu717. Low complexity-rich tracts occupy residues Gln739 to Ala748 and Pro766 to Gly779. Residues His823 to Arg833 show a composition bias toward basic residues. Residues Gly853 to Asp871 show a composition bias toward basic and acidic residues. Residue Ser964 is modified to Phosphoserine. Low complexity predominate over residues Ser980–Arg990. The segment covering Arg1005–Asp1019 has biased composition (polar residues). A compositionally biased stretch (basic and acidic residues) spans Val1040–Pro1056. Positions Gln1133–Lys1190 form a coiled coil. Positions Lys1246–Met1371 constitute an N-terminal Ras-GEF domain. In terms of domain architecture, Ras-GEF spans Ser1468–Ala1719.

In terms of assembly, interacts (via KIND2) with MAP2; the interaction enhances MAP2 phosphorylation and localizes KNDC1 to dendrites. Expressed specifically in the cerebral cortex.

It localises to the cell projection. The protein resides in the dendrite. It is found in the perikaryon. In terms of biological role, RAS-Guanine nucleotide exchange factor (GEF) that controls the negative regulation of neuronal dendrite growth by mediating a signaling pathway linking RAS and MAP2. May be involved in cellular senescence. The sequence is that of Kinase non-catalytic C-lobe domain-containing protein 1 from Homo sapiens (Human).